The following is a 1240-amino-acid chain: MFAPIGAPGMGERASQNFRSASGFRDLLVHAVKVLVLSAYQRRPCTSMLRPREQKRIKMRLKWMCLMKFCFMQNNYWDTQRRFTGGMHNVPELATFDAWLQHWRVVHWRLNIISEILIDFQALVRMMKNLAGQCHFDFYPVCTHCVQLVNNWYIAEFKPHLEEETEWWKDLVKPRMGNPVHEIEPNRKSQYVESRRIPPPLNGDEFANFLHVCQCAKLAFDVERAATEENFEDALDTLEEDFYDIDSTIPKRDLLAADARVVKRAFTLRRKRRPNRTSVYSMKGQPPVTFSASDLVSCLGQVLSTLPTVKMDREAIEDQQDHLEDKQGGEILTTPQFIEVLRKKKREVREKEFDDSTQGKLLPAEDFTLSKHDVFLANSVLDGLRKSKLIQRFAGKCATSTKITVDLTNKEEVVRYGPKELASEGFRQTFNVLNRPEYNALNKLAEAGWKEAKSVVLNLHIRSYLPQQMNAYAFCVIMWGHSSDAQEAALSGSYVYLGDGEATMLQLPLLCEYVGHNLQDFEAYKRSLVLSTVFPEFSGIADGKAMFGITSIEFTEYLPTSHAGITHERDSWDAMLRNHTEEKRRFLAGFNVVDTIEKGNRKGFSFPDFDLKAVPRHQAVVRTFEDQDVAPILSKAKSMRVKTFGSFRAGNIPVNFLGTPSNGQVASKHSVSENAGYSVGDMKSAENFVFTQLITVPAASTKGNVLAGVDILANARTTMSGFYMRWLQKGYIDTNLKLICHLPRAPFAGMSFFVLIDGTGYLAKDAPTSLNEEEILSYPLHLVTTSDVSSYEFVLDWHRYIGQVPFAEENAFLRPTLFLVACVSSTLALSAKVEFYLEAQSVGEELPRTLAPSPVLSYPFQNSFLEDLDLFLPPKRLTLGERETTIIPLSFAKSKKSGDAVLYSHAAARLAHFQGIGGVLHGVVYLVGSQLVASQSRISMWSKEQHIQHQAVNVHVDTDTGVAFDLPIKDAFYASSVYGDSGAVIQVTCLCSPMSPNAIKAPFDMIFKIRGFTPDAPMCRTINFTQRFGWFAVEPTTSTGAIKLKIWPVSNHLESEDMKVTGYTNAFLQMCQTSTMHFGSVIIHFSWTLFGGTTNAATAGGVVTIAEGFGPEEENFRGHCRNLSIYEGRATVPLELGTFAGPTPLKKLDFKYRNWIRFTTPKGRNISSIFCAIEVLPGFSFYGRTGSPRLSVVGTTVPPTADASTSNSQGGDEDIGDQYSAALGRGRGRGSRPGPSPIRG.

The segment covering 1193–1210 has biased composition (polar residues); that stretch reads VGTTVPPTADASTSNSQG. The tract at residues 1193–1240 is disordered; the sequence is VGTTVPPTADASTSNSQGGDEDIGDQYSAALGRGRGRGSRPGPSPIRG.

This sequence belongs to the nepoviruses RNA2 polyprotein family. Specific enzymatic cleavages in vivo by the P1 encoded 3C-like protease yield mature proteins.

The protein resides in the host cell junction. The protein localises to the host plasmodesma. It is found in the virion. In terms of biological role, implicated in RNA2 replication. Could also be required for nematode transmission of the virus. Its function is as follows. Transports viral genome to neighboring plant cells directly through plasmosdesmata, without any budding. The movement protein allows efficient cell to cell propagation, by bypassing the host cell wall barrier. Acts by forming a tubular structure at the host plasmodesmata, enlarging it enough to allow free passage of virion capsids. This chain is RNA2 polyprotein, found in Cycas necrotic stunt virus (CNSV).